Consider the following 197-residue polypeptide: Small ribosomal subunit protein uS4A (197 aa).

The S4 RNA-binding domain occupies 107–181 (RRLQTQVYKL…VARRNAARKA (75 aa)). The interval 160 to 197 (PTSPFGGARPGRVARRNAARKAEASGEAADEADEADEE) is disordered. Residue K180 forms a Glycyl lysine isopeptide (Lys-Gly) (interchain with G-Cter in ubiquitin) linkage. S184 carries the phosphoserine modification. Acidic residues predominate over residues 187–197 (AADEADEADEE).

The protein belongs to the universal ribosomal protein uS4 family. Component of the small ribosomal subunit (SSU). Mature yeast ribosomes consist of a small (40S) and a large (60S) subunit. The 40S small subunit contains 1 molecule of ribosomal RNA (18S rRNA) and 33 different proteins (encoded by 57 genes). The large 60S subunit contains 3 rRNA molecules (25S, 5.8S and 5S rRNA) and 46 different proteins (encoded by 81 genes). Interacts with snoRNA U3. uS11 interacts with MPP10. Component of the ribosomal small subunit (SSU) processome composed of at least 40 protein subunits and snoRNA U3.

It localises to the cytoplasm. The protein resides in the nucleus. Its subcellular location is the nucleolus. Component of the ribosome, a large ribonucleoprotein complex responsible for the synthesis of proteins in the cell. The small ribosomal subunit (SSU) binds messenger RNAs (mRNAs) and translates the encoded message by selecting cognate aminoacyl-transfer RNA (tRNA) molecules. The large subunit (LSU) contains the ribosomal catalytic site termed the peptidyl transferase center (PTC), which catalyzes the formation of peptide bonds, thereby polymerizing the amino acids delivered by tRNAs into a polypeptide chain. The nascent polypeptides leave the ribosome through a tunnel in the LSU and interact with protein factors that function in enzymatic processing, targeting, and the membrane insertion of nascent chains at the exit of the ribosomal tunnel. uS4 is involved in nucleolar processing of pre-18S ribosomal RNA and ribosome assembly. This is Small ribosomal subunit protein uS4A from Saccharomyces cerevisiae (strain ATCC 204508 / S288c) (Baker's yeast).